A 41-amino-acid polypeptide reads, in one-letter code: Putative toxic protein TimP (41 aa).

A transmembrane helix spans residues 1–17 (MKIRCFCIVLIVSGALL).

The protein belongs to the TimP toxin family.

Its subcellular location is the cell inner membrane. Putative toxic component of a potential type I toxin-antitoxin (TA) system. Neutralized by sRNA antitoxin TimR which binds to the 5' UTR of timP mRNA and inhibits translation. The antitoxin gene is encoded immediately upstream and transcribed divergently from the toxin gene; antitoxin RNA is less stable than timP mRNA. This Escherichia coli (strain K12) protein is Putative toxic protein TimP.